The chain runs to 376 residues: Phosphate acyltransferase (376 aa).

A disordered region spans residues 334–376; sequence AGSLEQAKRDAGGPGSASQMASPIAGPVSGQPAEPYSAQSSKA.

It belongs to the PlsX family. In terms of assembly, homodimer. Probably interacts with PlsY.

The protein localises to the cytoplasm. It catalyses the reaction a fatty acyl-[ACP] + phosphate = an acyl phosphate + holo-[ACP]. The protein operates within lipid metabolism; phospholipid metabolism. Its function is as follows. Catalyzes the reversible formation of acyl-phosphate (acyl-PO(4)) from acyl-[acyl-carrier-protein] (acyl-ACP). This enzyme utilizes acyl-ACP as fatty acyl donor, but not acyl-CoA. This chain is Phosphate acyltransferase, found in Paraburkholderia phymatum (strain DSM 17167 / CIP 108236 / LMG 21445 / STM815) (Burkholderia phymatum).